The following is a 207-amino-acid chain: MCVTKASLPMLSPTGSPQEVEVGKILQGKRHGTISPESCAKLYCYYGVIMVLTVAVIALSVALSATKTEQIPVNKTYAACPQNWIGVENKCFYFSEYPSNWTFAQAFCMAQEAQLARFDNQDELNFLMRYKANFDSWIGLHRESSEHPWKWTDNTEYNNTIPIRGEERFAYLNNNGISSTRIYSLRMWICSKLNSYSLHCQTPFFPS.

At 1–41 (MCVTKASLPMLSPTGSPQEVEVGKILQGKRHGTISPESCAK) the chain is on the cytoplasmic side. 2 positions are modified to phosphoserine: S7 and S12. A helical; Signal-anchor for type II membrane protein membrane pass occupies residues 42-62 (LYCYYGVIMVLTVAVIALSVA). The Extracellular segment spans residues 63-207 (LSATKTEQIP…LHCQTPFFPS (145 aa)). Cysteines 80 and 91 form a disulfide. Residues 87-202 (VENKCFYFSE…LNSYSLHCQT (116 aa)) enclose the C-type lectin domain. N-linked (GlcNAc...) asparagine glycosylation is present at N100.

Homodimer; disulfide-linked. In terms of processing, N-glycosylated. As to expression, detected in fetal heart, brain, lung, chondrocytes, perichondrium and osteoblasts, and in adult splenocytes, thymocytes, lymph-node cells, osteoblasts, growth plate chondrocytes and skeletal muscle overlying the bone (at protein level). Ubiquitous. Detected in thymus, bone marrow, lung, gut, heart, skeletal muscle, ovary, spleen, ileum, liver and kidney.

It localises to the cell membrane. Receptor for KLRB1B that protects target cells against natural killer cell-mediated lysis. Inhibits osteoclast formation. Binds high molecular weight sulfated glycosaminoglycans. The sequence is that of C-type lectin domain family 2 member D (Clec2d) from Mus musculus (Mouse).